The primary structure comprises 198 residues: DNA damage response protein D (198 aa).

The tract at residues 124–198 (SAAPTDPAGP…SEAGENTPAA (75 aa)) is disordered. The segment covering 136 to 180 (PGTDRAERTAAERTASERATHDRASTERPARPRRSAEPEAVRTED) has biased composition (basic and acidic residues).

Its function is as follows. Appears to contribute to D.radiodurans capacity to survive exposure to ionizing radiation. May play a role in DNA repair and genome reconstitution. The protein is DNA damage response protein D (ddrD) of Deinococcus radiodurans (strain ATCC 13939 / DSM 20539 / JCM 16871 / CCUG 27074 / LMG 4051 / NBRC 15346 / NCIMB 9279 / VKM B-1422 / R1).